A 102-amino-acid polypeptide reads, in one-letter code: UPF0473 protein SERP1179 (102 aa).

This sequence belongs to the UPF0473 family.

This is UPF0473 protein SERP1179 from Staphylococcus epidermidis (strain ATCC 35984 / DSM 28319 / BCRC 17069 / CCUG 31568 / BM 3577 / RP62A).